The chain runs to 98 residues: Integration host factor subunit alpha (98 aa).

The interval 51-71 (NFDLRDKNERPGRNPKTGEDI) is disordered. The segment covering 53–69 (DLRDKNERPGRNPKTGE) has biased composition (basic and acidic residues).

It belongs to the bacterial histone-like protein family. As to quaternary structure, heterodimer of an alpha and a beta chain.

In terms of biological role, this protein is one of the two subunits of integration host factor, a specific DNA-binding protein that functions in genetic recombination as well as in transcriptional and translational control. The chain is Integration host factor subunit alpha from Vibrio campbellii (strain ATCC BAA-1116).